The chain runs to 378 residues: Fructose-1,6-bisphosphatase class 1 2 (378 aa).

Mg(2+) contacts are provided by glutamate 98, aspartate 120, leucine 122, and aspartate 123. Residues 123-126 (DGSS) and asparagine 227 each bind substrate. Residue glutamate 299 participates in Mg(2+) binding.

Belongs to the FBPase class 1 family. Homotetramer. Requires Mg(2+) as cofactor.

It localises to the cytoplasm. It catalyses the reaction beta-D-fructose 1,6-bisphosphate + H2O = beta-D-fructose 6-phosphate + phosphate. The protein operates within carbohydrate biosynthesis; gluconeogenesis. This chain is Fructose-1,6-bisphosphatase class 1 2, found in Paraburkholderia xenovorans (strain LB400).